A 155-amino-acid chain; its full sequence is Aspartate carbamoyltransferase regulatory chain (155 aa).

Residues Cys-113, Cys-118, Cys-139, and Cys-142 each coordinate Zn(2+).

This sequence belongs to the PyrI family. As to quaternary structure, contains catalytic and regulatory chains. It depends on Zn(2+) as a cofactor.

In terms of biological role, involved in allosteric regulation of aspartate carbamoyltransferase. This is Aspartate carbamoyltransferase regulatory chain from Methanospirillum hungatei JF-1 (strain ATCC 27890 / DSM 864 / NBRC 100397 / JF-1).